The sequence spans 472 residues: Coronin-6 (472 aa).

WD repeat units follow at residues glutamine 23 to leucine 64, lysine 72 to isoleucine 111, glutamate 122 to valine 161, glutamate 165 to proline 204, valine 210 to proline 251, and glutamate 256 to isoleucine 296. Residues lysine 407–glutamine 433 are disordered. A compositionally biased stretch (polar residues) spans arginine 420–glutamine 433. A coiled-coil region spans residues leucine 430–leucine 464.

The polypeptide is Coronin-6 (CORO6) (Homo sapiens (Human)).